We begin with the raw amino-acid sequence, 308 residues long: MSAQKPGLHPRNRHHSRYDLATLCQVNPELRQFLTLTPAGEQSVDFANPLAVKALNKALLAHFYAVANWDIPDGFLCPPVPGRADYIHHLADLLAEASGTIQANASILDIGVGANCIYPLIGVHEYGWRFTGSETSSQALSSAQAIISANPGLNRAIRLRRQKESGAIFNGIIHKNEQYDATLCNPPFHDSATAARAGSERKRRNLGLNKDDALNFGGQQQELWCEGGEVAFIKKMIEESKGFAKQVMWFTSLVSRGENLPPLYRALTDVGAVKVVKKEMAQGQKQSRFIAWTFMNDEQRRRFVNRQR.

Belongs to the methyltransferase superfamily. METTL16/RlmF family.

The protein localises to the cytoplasm. It carries out the reaction adenosine(1618) in 23S rRNA + S-adenosyl-L-methionine = N(6)-methyladenosine(1618) in 23S rRNA + S-adenosyl-L-homocysteine + H(+). Functionally, specifically methylates the adenine in position 1618 of 23S rRNA. This Escherichia coli O127:H6 (strain E2348/69 / EPEC) protein is Ribosomal RNA large subunit methyltransferase F.